The chain runs to 34 residues: Photosystem I reaction center subunit XII (34 aa).

A helical membrane pass occupies residues 5–25; sequence ISSPEIFIALVVAAHAAILAL.

The protein belongs to the PsaM family.

It is found in the cellular thylakoid membrane. This chain is Photosystem I reaction center subunit XII, found in Synechococcus sp. (strain CC9902).